Reading from the N-terminus, the 334-residue chain is Putative transport protein MJ1177 (334 aa).

Helical transmembrane passes span 13-33 (VIVG…DVLA), 61-81 (LAIS…LLTF), 138-158 (IIDV…TFYF), 191-211 (SYKN…ILSY), 234-254 (LLPI…FFLI), 259-279 (KAVF…DFVI), and 293-313 (VLVV…GFAI).

It belongs to the autoinducer-2 exporter (AI-2E) (TC 2.A.86) family.

The protein resides in the cell membrane. This Methanocaldococcus jannaschii (strain ATCC 43067 / DSM 2661 / JAL-1 / JCM 10045 / NBRC 100440) (Methanococcus jannaschii) protein is Putative transport protein MJ1177.